The chain runs to 103 residues: Preprofallaxidin-6 (103 aa).

Positions 1-22 are cleaved as a signal peptide; it reads MASLKKSLFLVLFLGFVSLSIC. The propeptide occupies 23–49; it reads EEEKRENEGNENEEEDENHEEGSEEKR. Positions 24-50 are disordered; sequence EEKRENEGNENEEEDENHEEGSEEKRG. Positions 31 to 41 are enriched in acidic residues; that stretch reads GNENEEEDENH. Residue Leu65 is modified to Leucine amide. Residues 67-103 form a disordered region; sequence KRSEEKRYHPFGKRSEEKRYHPFGKRSEEKRYPPIGK. Positions 69–73 are excised as a propeptide; that stretch reads SEEKR. At Phe77 the chain carries Phenylalanine amide. A propeptide spanning residues 81–85 is cleaved from the precursor; sequence SEEKR. Phe89 is modified (phenylalanine amide). Residues 93 to 97 constitute a propeptide that is removed on maturation; that stretch reads SEEKR. Ile101 is modified (isoleucine amide).

This sequence belongs to the frog skin active peptide (FSAP) family. Brevinin subfamily. In terms of tissue distribution, expressed by the skin glands.

It is found in the secreted. Its function is as follows. Fallaxidin-1.3 shows no antibacterial activity against Gram-positive or Gram-negative bacteria. Does not inhibit the formation of NO by neuronal nitric oxide synthase. Has no effect on splenocyte proliferation or smooth muscle contraction. In terms of biological role, fallaxidin-1.4 shows no antibacterial activity against Gram-positive or Gram-negative bacteria. Does not inhibit the formation of NO by neuronal nitric oxide synthase. Has no effect on splenocyte proliferation or smooth muscle contraction. Fallaxidin-3.1 shows antibacterial activity against the Gram-positive bacteria E.faecalis (MIC=100 uM) and L.lactis (MIC=100 uM). No antibacterial activity against the Gram-positive bacteria B.cereus, L.innocua, M.luteus, S.epidermidis, S.uberis and S.aureus, or the Gram-negative bacteria E.cloacae and E.coli. The polypeptide is Preprofallaxidin-6 (Litoria fallax (Eastern dwarf tree frog)).